The primary structure comprises 470 residues: MQNHKNELQRSMKSRHLFMIALGGVIGTGLFLGSGFTISQAGPLGAIAAYIIGGFLMYLVMLCLGELAVAMPVAGSFQAYATKFLGQSTGFMIGWLYWFSWANTVGLELTSAGILMQRWLPSVPIWIWCLVFGIVIFLINALSVRSFAEMEFWFSSIKVAAIILFIVIGGAAVFGLIDFKGGQETPFLSNFMTDRGLFPNGVLAVMFTLVMVNFSFQGTELVGIAAGESESPEKTLPKSIRNVIWRTLFFFVLAMFVLVAILPYKTAGVIESPFVAVLDQIGIPFSADIMNFVILTAILSVANSGLYAASRMMWSLSSNQMGPSFLTRLTKKGVPMNALLITLGISGCSLLTSVMAAETVYLWCISISGMVTVVAWMSICASQFFFRRRFLAEGGNVNDLEFRTPLYPLVPILGFCLYGCVLISLIFIPDQRIGLYCGVPIIIFCYAYYHLSIKKRINHETIEKKQTEAQ.

The next 12 membrane-spanning stretches (helical) occupy residues Phe-18–Ile-38, Leu-44–Leu-64, Gly-90–Thr-110, Trp-119–Ile-139, Val-159–Phe-179, Gly-196–Phe-216, Val-243–Pro-263, Ile-281–Val-301, Ala-338–Glu-358, Val-360–Cys-380, Leu-409–Pro-429, and Ile-433–Ile-453.

It belongs to the amino acid-polyamine-organocation (APC) superfamily.

The protein resides in the cell membrane. Functionally, putative transport protein involved in arginine degradative pathway. Probably transports arginine or ornithine. The polypeptide is Amino-acid permease RocC (rocC) (Bacillus subtilis (strain 168)).